A 99-amino-acid chain; its full sequence is Integration host factor subunit alpha (99 aa).

It belongs to the bacterial histone-like protein family. As to quaternary structure, heterodimer of an alpha and a beta chain.

Functionally, this protein is one of the two subunits of integration host factor, a specific DNA-binding protein that functions in genetic recombination as well as in transcriptional and translational control. The protein is Integration host factor subunit alpha of Thioalkalivibrio sulfidiphilus (strain HL-EbGR7).